A 43-amino-acid chain; its full sequence is Augerpeptide hhe9.2 (43 aa).

An EGF-like domain is found at 2–40; that stretch reads EEVGCFPNVCKNDGNCSIETSTGMTRCQCLEGYTGHVCE. 3 disulfides stabilise this stretch: C6-C28, C11-C30, and C17-C39.

As to expression, expressed by the venom duct.

The protein resides in the secreted. This chain is Augerpeptide hhe9.2, found in Hastula hectica (Sea snail).